The following is a 448-amino-acid chain: Cysteine--tRNA ligase (448 aa).

Residue cysteine 29 coordinates Zn(2+). Positions 31 to 41 (PTVYNYIHIGN) match the 'HIGH' region motif. Cysteine 212, histidine 237, and glutamate 241 together coordinate Zn(2+). Residues 269–273 (KMSKS) carry the 'KMSKS' region motif. An ATP-binding site is contributed by lysine 272.

It belongs to the class-I aminoacyl-tRNA synthetase family. As to quaternary structure, monomer. It depends on Zn(2+) as a cofactor.

The protein resides in the cytoplasm. The catalysed reaction is tRNA(Cys) + L-cysteine + ATP = L-cysteinyl-tRNA(Cys) + AMP + diphosphate. This Streptococcus equi subsp. zooepidemicus (strain MGCS10565) protein is Cysteine--tRNA ligase.